The primary structure comprises 71 residues: Omega-conotoxin-like Ac6.4 (71 aa).

Positions 1-22 (MKLTCVVIVAVLLLTACQLLTA) are cleaved as a signal peptide. The propeptide occupies 23–45 (DDSRGTQKHRALRSDTKLSMSTR). 3 disulfides stabilise this stretch: Cys-46/Cys-61, Cys-53/Cys-65, and Cys-60/Cys-70. Cys-70 is modified (cysteine amide).

The protein belongs to the conotoxin O1 superfamily. In terms of tissue distribution, expressed by the venom duct.

Its subcellular location is the secreted. Its function is as follows. Omega-conotoxins act at presynaptic membranes, they bind and block voltage-gated calcium channels (Cav). The chain is Omega-conotoxin-like Ac6.4 from Conus achatinus (Little frog cone).